Here is an 881-residue protein sequence, read N- to C-terminus: Fanconi anemia core complex-associated protein 100 (881 aa).

Positions 94-119 (GRSRSTSQDDRDSEDGDQPSPVIPVD) are disordered. At S667 the chain carries Phosphoserine.

Belongs to the multisubunit FA complex composed of FANCA, FANCB, FANCC, FANCE, FANCF, FANCG, FANCL/PHF9, FANCM, FAAP24 and FAAP100. Forms a subcomplex with FANCB and FANCL.

The protein resides in the nucleus. In terms of biological role, plays a role in Fanconi anemia-associated DNA damage response network. Regulates FANCD2 monoubiquitination and the stability of the FA core complex. Induces chromosomal instability as well as hypersensitivity to DNA cross-linking agents, when repressed. This Homo sapiens (Human) protein is Fanconi anemia core complex-associated protein 100.